The chain runs to 392 residues: GTPase Obg (392 aa).

One can recognise an Obg domain in the interval 1–159 (MKFIDEALIR…RDLQLELMLL (159 aa)). Residues 160–333 (ADVGMLGLPN…LCRDIMDFIE (174 aa)) enclose the OBG-type G domain. GTP is bound by residues 166 to 173 (GLPNAGKS), 191 to 195 (FTTLV), 213 to 216 (DIPG), 283 to 286 (NKID), and 314 to 316 (SAA). Residues serine 173 and threonine 193 each contribute to the Mg(2+) site. The tract at residues 362-392 (EQVFTEDDQEGDDWDDWSEDDEEGVEIIYKP) is disordered. The span at 365–386 (FTEDDQEGDDWDDWSEDDEEGV) shows a compositional bias: acidic residues.

This sequence belongs to the TRAFAC class OBG-HflX-like GTPase superfamily. OBG GTPase family. In terms of assembly, monomer. Mg(2+) is required as a cofactor.

The protein localises to the cytoplasm. In terms of biological role, an essential GTPase which binds GTP, GDP and possibly (p)ppGpp with moderate affinity, with high nucleotide exchange rates and a fairly low GTP hydrolysis rate. Plays a role in control of the cell cycle, stress response, ribosome biogenesis and in those bacteria that undergo differentiation, in morphogenesis control. The chain is GTPase Obg from Histophilus somni (strain 129Pt) (Haemophilus somnus).